Consider the following 449-residue polypeptide: Biotin carboxylase (449 aa).

The Biotin carboxylation domain maps to 1–445; sequence MLDKIVIANR…NIHYLEKKLG (445 aa). ATP contacts are provided by residues lysine 116, lysine 159, 165-166, 201-204, histidine 209, and histidine 236; these read GG and EKYL. The 198-residue stretch at 120–317 folds into the ATP-grasp domain; the sequence is IAAMKKAGVP…LIKEQLRIAA (198 aa). Residue lysine 238 coordinates hydrogencarbonate. ATP-binding residues include glutamate 276 and glutamate 288. 3 residues coordinate Mg(2+): glutamate 276, glutamate 288, and asparagine 290. The Mn(2+) site is built by glutamate 276, glutamate 288, and asparagine 290. Residues arginine 292, valine 295, and arginine 338 each contribute to the hydrogencarbonate site. Residue arginine 292 is part of the active site. Arginine 338 contacts biotin.

In terms of assembly, acetyl-CoA carboxylase is a heterohexamer of biotin carboxyl carrier protein, biotin carboxylase and the two subunits of carboxyl transferase in a 2:2 complex. Mg(2+) is required as a cofactor. The cofactor is Mn(2+).

It carries out the reaction N(6)-biotinyl-L-lysyl-[protein] + hydrogencarbonate + ATP = N(6)-carboxybiotinyl-L-lysyl-[protein] + ADP + phosphate + H(+). Its pathway is lipid metabolism; malonyl-CoA biosynthesis; malonyl-CoA from acetyl-CoA: step 1/1. In terms of biological role, this protein is a component of the acetyl coenzyme A carboxylase complex; first, biotin carboxylase catalyzes the carboxylation of the carrier protein and then the transcarboxylase transfers the carboxyl group to form malonyl-CoA. The polypeptide is Biotin carboxylase (accC) (Escherichia coli O157:H7).